The chain runs to 51 residues: Toxin CSTX-18 (51 aa).

4 disulfides stabilise this stretch: C9–C22, C14–C27, C21–C36, and C29–C34.

In terms of processing, contains 4 disulfide bonds. Expressed by the venom gland.

Its subcellular location is the secreted. The chain is Toxin CSTX-18 from Cupiennius salei (American wandering spider).